We begin with the raw amino-acid sequence, 267 residues long: NH(3)-dependent NAD(+) synthetase (267 aa).

38–45 is an ATP binding site; that stretch reads GISGGVDS. D44 is a Mg(2+) binding site. R123 is a binding site for deamido-NAD(+). T143 is a binding site for ATP. E148 is a binding site for Mg(2+). K156 and D163 together coordinate deamido-NAD(+). ATP-binding residues include K172 and S193. Deamido-NAD(+) is bound at residue 250–251; that stretch reads HK.

Belongs to the NAD synthetase family. As to quaternary structure, homodimer.

The enzyme catalyses deamido-NAD(+) + NH4(+) + ATP = AMP + diphosphate + NAD(+) + H(+). The protein operates within cofactor biosynthesis; NAD(+) biosynthesis; NAD(+) from deamido-NAD(+) (ammonia route): step 1/1. Functionally, catalyzes the ATP-dependent amidation of deamido-NAD to form NAD. Uses ammonia as a nitrogen source. The protein is NH(3)-dependent NAD(+) synthetase of Pyrobaculum aerophilum (strain ATCC 51768 / DSM 7523 / JCM 9630 / CIP 104966 / NBRC 100827 / IM2).